We begin with the raw amino-acid sequence, 178 residues long: CCHC-type zinc finger nucleic acid binding protein (178 aa).

Ser2 is subject to N-acetylserine. The CCHC-type 1 zinc finger occupies 4–21; that stretch reads NECFKCGRSGHWARECPT. N6-acetyllysine is present on Lys8. An omega-N-methylarginine; by PRMT1 mark is found at Arg25 and Arg27. Residues 25-38 form an RNA-binding Arg/Gly-rich region (RGG-box) region; the sequence is RGRGMRSRGRGGFT. An omega-N-methylarginine mark is found at Arg32 and Arg34. At Ser49 the chain carries Phosphoserine. 6 CCHC-type zinc fingers span residues 52 to 69, 72 to 90, 97 to 114, 118 to 135, 136 to 153, and 157 to 174; these read DICY…DCDL, DEAC…DCKE, QCCY…DCDH, QKCY…DCTK, VKCY…NCSK, and VNCY…ECTI. Omega-N-methylarginine occurs at positions 72, 79, and 80.

As to quaternary structure, associates with the 40S ribosomal subunit, the 80S ribosome and with polysomes. In terms of processing, arginine methylation by PRMT1 in the Arg/Gly-rich region impedes RNA binding.

The protein resides in the nucleus. The protein localises to the cytoplasm. It localises to the endoplasmic reticulum. In terms of biological role, single-stranded DNA-binding protein that preferentially binds to the sterol regulatory element (SRE) sequence 5'-GTGCGGTG-3', and thereby mediates transcriptional repression. Has a role as transactivator of the Myc promoter. Binds single-stranded RNA in a sequence-specific manner. Binds G-rich elements in target mRNA coding sequences. Prevents G-quadruplex structure formation in vitro, suggesting a role in supporting translation by resolving stable structures on mRNAs. This chain is CCHC-type zinc finger nucleic acid binding protein, found in Mus musculus (Mouse).